A 259-amino-acid chain; its full sequence is Phosphate import ATP-binding protein PstB 1 (259 aa).

Positions 13–254 (IETKDVDLFY…PAEKETEDYI (242 aa)) constitute an ABC transporter domain. An ATP-binding site is contributed by 45–52 (GPSGCGKS).

The protein belongs to the ABC transporter superfamily. Phosphate importer (TC 3.A.1.7) family. In terms of assembly, the complex is composed of two ATP-binding proteins (PstB), two transmembrane proteins (PstC and PstA) and a solute-binding protein (PstS).

The protein resides in the cell membrane. It catalyses the reaction phosphate(out) + ATP + H2O = ADP + 2 phosphate(in) + H(+). Part of the ABC transporter complex PstSACB involved in phosphate import. Responsible for energy coupling to the transport system. The sequence is that of Phosphate import ATP-binding protein PstB 1 from Listeria innocua serovar 6a (strain ATCC BAA-680 / CLIP 11262).